The following is a 141-amino-acid chain: Methylglyoxal synthase (141 aa).

The region spanning Met1–Lys141 is the MGS-like domain. Residues His8, Lys12, and Thr34–Thr37 contribute to the substrate site. The active-site Proton donor/acceptor is the Asp60. His87 is a binding site for substrate.

Belongs to the methylglyoxal synthase family.

It carries out the reaction dihydroxyacetone phosphate = methylglyoxal + phosphate. Its function is as follows. Catalyzes the formation of methylglyoxal from dihydroxyacetone phosphate. The protein is Methylglyoxal synthase of Caldicellulosiruptor bescii (strain ATCC BAA-1888 / DSM 6725 / KCTC 15123 / Z-1320) (Anaerocellum thermophilum).